The chain runs to 152 residues: MAGLPRRIIKETQRLLAEPVPGIKAEPDESNARYFHVVIAGPQDSPFEGGTFKLELFLPEEYPMAAPKVRFMTKIYHPNVDKLGRICLDILKDKWSPALQIRTVLLSIQALLSAPNPDDPLANDVAEQWKTNEAQAIETARAWTRLYAMNNI.

The UBC core domain occupies 3 to 149 (GLPRRIIKET…ARAWTRLYAM (147 aa)). An N6-acetyllysine modification is found at K82. The active-site Glycyl thioester intermediate is C87. A Glycyl lysine isopeptide (Lys-Gly) (interchain with G-Cter in ISG15) cross-link involves residue K92.

The protein belongs to the ubiquitin-conjugating enzyme family. Heterodimer with UBE2V2. Interacts (UBE2V2-UBE2N heterodimer) with the E3 ligase STUB1 (via the U-box domain); the complex has a specific 'Lys-63'-linked polyubiquitination activity. Interacts with RNF8 and RNF168. Interacts with RNF11. Interacts with the E3 ligases, HLTF and SHPRH; the interactions promote the 'Lys-63'-linked polyubiquitination of PCNA upon genotoxic stress and lead to DNA repair. Interacts with ARIH2 (via RING-type 2). Interacts with OTUB1; leading to inhibit E2-conjugating activity. Interacts with GPS2; leading to inhibit E2-conjugating activity. Interacts with RIGI and RNF135; involved in RIGI ubiquitination and activation. Post-translationally, conjugation to ISG15 impairs formation of the thioester bond with ubiquitin but not interaction with UBE2V2.

The enzyme catalyses S-ubiquitinyl-[E1 ubiquitin-activating enzyme]-L-cysteine + [E2 ubiquitin-conjugating enzyme]-L-cysteine = [E1 ubiquitin-activating enzyme]-L-cysteine + S-ubiquitinyl-[E2 ubiquitin-conjugating enzyme]-L-cysteine.. It participates in protein modification; protein ubiquitination. With respect to regulation, activity is inhibited by binding to OTUB1, which prevents 'Lys-63'-linked polyubiquitination. Activity is inhibited by GPS2, leading to prevent 'Lys-63'-linked polyubiquitination. The UBE2V1-UBE2N and UBE2V2-UBE2N heterodimers catalyze the synthesis of non-canonical 'Lys-63'-linked polyubiquitin chains. This type of polyubiquitination does not lead to protein degradation by the proteasome. Mediates transcriptional activation of target genes. Plays a role in the control of progress through the cell cycle and differentiation. Plays a role in the error-free DNA repair pathway and contributes to the survival of cells after DNA damage. Acts together with the E3 ligases, HLTF and SHPRH, in the 'Lys-63'-linked poly-ubiquitination of PCNA upon genotoxic stress, which is required for DNA repair. Appears to act together with E3 ligase RNF5 in the 'Lys-63'-linked polyubiquitination of JKAMP thereby regulating JKAMP function by decreasing its association with components of the proteasome and ERAD. Promotes TRIM5 capsid-specific restriction activity and the UBE2V1-UBE2N heterodimer acts in concert with TRIM5 to generate 'Lys-63'-linked polyubiquitin chains which activate the MAP3K7/TAK1 complex which in turn results in the induction and expression of NF-kappa-B and MAPK-responsive inflammatory genes. Together with RNF135 and UB2V1, catalyzes the viral RNA-dependent 'Lys-63'-linked polyubiquitination of RIGI to activate the downstream signaling pathway that leads to interferon beta production. UBE2V1-UBE2N together with TRAF3IP2 E3 ubiquitin ligase mediate 'Lys-63'-linked polyubiquitination of TRAF6, a component of IL17A-mediated signaling pathway. The chain is Ubiquitin-conjugating enzyme E2 N (UBE2N) from Bos taurus (Bovine).